Here is a 348-residue protein sequence, read N- to C-terminus: Protein RecA (348 aa).

65–72 (GPESSGKT) serves as a coordination point for ATP.

The protein belongs to the RecA family.

It localises to the cytoplasm. In terms of biological role, can catalyze the hydrolysis of ATP in the presence of single-stranded DNA, the ATP-dependent uptake of single-stranded DNA by duplex DNA, and the ATP-dependent hybridization of homologous single-stranded DNAs. It interacts with LexA causing its activation and leading to its autocatalytic cleavage. The protein is Protein RecA of Enterococcus faecalis (strain ATCC 700802 / V583).